We begin with the raw amino-acid sequence, 2294 residues long: Protein Ycf2 (2294 aa).

1648–1655 (GSIGTGRS) is a binding site for ATP.

Belongs to the Ycf2 family.

The protein localises to the plastid. It localises to the chloroplast stroma. Probable ATPase of unknown function. Its presence in a non-photosynthetic plant (Epifagus virginiana) and experiments in tobacco indicate that it has an essential function which is probably not related to photosynthesis. The protein is Protein Ycf2 of Arabidopsis thaliana (Mouse-ear cress).